Reading from the N-terminus, the 206-residue chain is uncharacterized protein (206 aa).

A signal peptide spans 1–18 (MKTYSLLLGLFISFGVLA).

This is an uncharacterized protein from Haemophilus influenzae (strain ATCC 51907 / DSM 11121 / KW20 / Rd).